Reading from the N-terminus, the 325-residue chain is Zinc-type alcohol dehydrogenase-like protein C337.11 (325 aa).

It belongs to the zinc-containing alcohol dehydrogenase family. Quinone oxidoreductase subfamily.

It is found in the cytoplasm. It localises to the nucleus. This is Zinc-type alcohol dehydrogenase-like protein C337.11 from Schizosaccharomyces pombe (strain 972 / ATCC 24843) (Fission yeast).